The primary structure comprises 249 residues: Triosephosphate isomerase (249 aa).

A substrate-binding site is contributed by 9–11; sequence NWK. Catalysis depends on H94, which acts as the Electrophile. The active-site Proton acceptor is the E166. Substrate is bound by residues G172, S211, and 232 to 233; that span reads GG.

Belongs to the triosephosphate isomerase family. In terms of assembly, homodimer.

Its subcellular location is the cytoplasm. The enzyme catalyses D-glyceraldehyde 3-phosphate = dihydroxyacetone phosphate. It participates in carbohydrate biosynthesis; gluconeogenesis. The protein operates within carbohydrate degradation; glycolysis; D-glyceraldehyde 3-phosphate from glycerone phosphate: step 1/1. In terms of biological role, involved in the gluconeogenesis. Catalyzes stereospecifically the conversion of dihydroxyacetone phosphate (DHAP) to D-glyceraldehyde-3-phosphate (G3P). This chain is Triosephosphate isomerase, found in Dechloromonas aromatica (strain RCB).